The primary structure comprises 367 residues: Phosphoribosylaminoimidazole-succinocarboxamide synthase (367 aa).

This sequence belongs to the SAICAR synthetase family.

The catalysed reaction is 5-amino-1-(5-phospho-D-ribosyl)imidazole-4-carboxylate + L-aspartate + ATP = (2S)-2-[5-amino-1-(5-phospho-beta-D-ribosyl)imidazole-4-carboxamido]succinate + ADP + phosphate + 2 H(+). The protein operates within purine metabolism; IMP biosynthesis via de novo pathway; 5-amino-1-(5-phospho-D-ribosyl)imidazole-4-carboxamide from 5-amino-1-(5-phospho-D-ribosyl)imidazole-4-carboxylate: step 1/2. The polypeptide is Phosphoribosylaminoimidazole-succinocarboxamide synthase (Psychromonas ingrahamii (strain DSM 17664 / CCUG 51855 / 37)).